The following is a 178-amino-acid chain: Enhancer of split m5 protein (178 aa).

The bHLH domain occupies 18-73 (YLKVKKPLLERQRRARMNKCLDTLKTLVAEFQGDDAILRMDKAEMLEAALVFMRKQ). The 34-residue stretch at 89-122 (FKNGYMNAVSEISRVMACTPAMSVDVGKTVMTHL) folds into the Orange domain. Positions 135-165 (VQTSVTTSTPRPLSPASSGYHSDNEDSQSAA) are enriched in polar residues. A disordered region spans residues 135 to 178 (VQTSVTTSTPRPLSPASSGYHSDNEDSQSAASPKPVEETMWRPW). The span at 169 to 178 (PVEETMWRPW) shows a compositional bias: basic and acidic residues. Positions 175–178 (WRPW) match the WRPW motif motif.

As to quaternary structure, transcription repression requires formation of a complex with a corepressor protein (Groucho). Forms homodimers.

Its subcellular location is the nucleus. Participates in the control of cell fate choice by uncommitted neuroectodermal cells in the embryo. Transcriptional repressor. Binds DNA on N-box motifs: 5'-CACNAG-3'. The chain is Enhancer of split m5 protein from Drosophila melanogaster (Fruit fly).